A 369-amino-acid chain; its full sequence is Hsc70-interacting protein (369 aa).

The segment at M38 to Q97 is disordered. Positions A49 to E73 are enriched in basic and acidic residues. TPR repeat units follow at residues A114–L147, A148–S181, and A182–E215. Basic and acidic residues predominate over residues K256–R272. The interval K256 to M300 is disordered. Positions F281–M300 are enriched in gly residues. The region spanning D319 to I358 is the STI1 domain. Position 346 is a phosphoserine; by GRK5 (S346). N6-acetyllysine is present on residues K353 and K360.

The protein belongs to the FAM10 family. Homotetramer. Interacts with HSC70 as well as DNAJ homologs and HSP90. Interacts (via the C-terminus 303- 319 AA) with GRK5.

It is found in the cytoplasm. Its function is as follows. One HIP oligomer binds the ATPase domains of at least two HSC70 molecules dependent on activation of the HSC70 ATPase by HSP40. Stabilizes the ADP state of HSC70 that has a high affinity for substrate protein. Through its own chaperone activity, it may contribute to the interaction of HSC70 with various target proteins. This is Hsc70-interacting protein (ST13) from Homo sapiens (Human).